Consider the following 363-residue polypeptide: Peptide chain release factor 2 (363 aa).

At Gln251 the chain carries N5-methylglutamine.

Belongs to the prokaryotic/mitochondrial release factor family. Methylated by PrmC. Methylation increases the termination efficiency of RF2.

It localises to the cytoplasm. Its function is as follows. Peptide chain release factor 2 directs the termination of translation in response to the peptide chain termination codons UGA and UAA. The chain is Peptide chain release factor 2 from Helicobacter acinonychis (strain Sheeba).